A 77-amino-acid chain; its full sequence is UPF0248 protein Pcal_0252 (77 aa).

The protein belongs to the UPF0248 family.

This chain is UPF0248 protein Pcal_0252, found in Pyrobaculum calidifontis (strain DSM 21063 / JCM 11548 / VA1).